The chain runs to 147 residues: Augurin (147 aa).

The first 31 residues, Met1 to Gly31, serve as a signal peptide directing secretion. Propeptides lie at residues Asn32–Pro68 and Ser132–Tyr147.

This sequence belongs to the augurin family.

The protein resides in the secreted. The protein localises to the cytoplasm. Its subcellular location is the apical cell membrane. Probable hormone that may attenuate cell proliferation and induce senescence of oligodendrocyte and neural precursor cells in the central nervous system. ECRG4-induced senescence is characterized by G1 arrest, RB1 dephosphorylation and accelerated CCND1 and CCND3 proteasomal degradation. The protein is Augurin of Bos taurus (Bovine).